The primary structure comprises 369 residues: 4-hydroxy-3-methylbut-2-en-1-yl diphosphate synthase (flavodoxin) (369 aa).

Residues Cys270, Cys273, Cys305, and Glu312 each contribute to the [4Fe-4S] cluster site.

The protein belongs to the IspG family. The cofactor is [4Fe-4S] cluster.

It carries out the reaction (2E)-4-hydroxy-3-methylbut-2-enyl diphosphate + oxidized [flavodoxin] + H2O + 2 H(+) = 2-C-methyl-D-erythritol 2,4-cyclic diphosphate + reduced [flavodoxin]. It participates in isoprenoid biosynthesis; isopentenyl diphosphate biosynthesis via DXP pathway; isopentenyl diphosphate from 1-deoxy-D-xylulose 5-phosphate: step 5/6. Converts 2C-methyl-D-erythritol 2,4-cyclodiphosphate (ME-2,4cPP) into 1-hydroxy-2-methyl-2-(E)-butenyl 4-diphosphate. The chain is 4-hydroxy-3-methylbut-2-en-1-yl diphosphate synthase (flavodoxin) from Haemophilus ducreyi (strain 35000HP / ATCC 700724).